A 222-amino-acid polypeptide reads, in one-letter code: Putative cobalt transport protein CbiM (222 aa).

Helical transmembrane passes span Leu-8 to Ile-28, Pro-43 to Val-63, Leu-75 to Phe-95, Thr-107 to Phe-127, Leu-134 to Thr-154, and Ile-178 to Trp-198.

It belongs to the CbiM family. As to quaternary structure, forms an energy-coupling factor (ECF) transporter complex composed of an ATP-binding protein (A component, CbiO), a transmembrane protein (T component, CbiQ) and 2 possible substrate-capture proteins (S components, CbiM and CbiN) of unknown stoichimetry.

Its subcellular location is the cell membrane. Its pathway is cofactor biosynthesis; adenosylcobalamin biosynthesis. Functionally, part of the energy-coupling factor (ECF) transporter complex CbiMNOQ involved in cobalt import. The sequence is that of Putative cobalt transport protein CbiM from Methanococcus voltae (strain ATCC BAA-1334 / A3).